Reading from the N-terminus, the 590-residue chain is Zinc finger protein 285 (590 aa).

In terms of domain architecture, KRAB spans valine 8–valine 86. The C2H2-type 1 zinc finger occupies phenylalanine 232 to histidine 254. The C2H2-type 2; degenerate zinc finger occupies tyrosine 260 to histidine 282. C2H2-type zinc fingers lie at residues tyrosine 316 to histidine 338, tyrosine 344 to histidine 366, tyrosine 372 to histidine 394, tyrosine 400 to histidine 422, tyrosine 428 to histidine 450, tyrosine 456 to histidine 478, tyrosine 484 to histidine 506, tyrosine 512 to histidine 534, and tyrosine 540 to histidine 562.

It belongs to the krueppel C2H2-type zinc-finger protein family.

It localises to the nucleus. Its function is as follows. May be involved in transcriptional regulation. This is Zinc finger protein 285 (ZNF285) from Homo sapiens (Human).